We begin with the raw amino-acid sequence, 130 residues long: Small ribosomal subunit protein uS9 (130 aa).

A disordered region spans residues 107–130 (DSRKVERKKPGLKKARKASQFSKR). Residues 111–130 (VERKKPGLKKARKASQFSKR) are compositionally biased toward basic residues.

This sequence belongs to the universal ribosomal protein uS9 family.

In Streptococcus sanguinis (strain SK36), this protein is Small ribosomal subunit protein uS9.